We begin with the raw amino-acid sequence, 703 residues long: FERM domain-containing protein 7 (703 aa).

In terms of domain architecture, FERM spans 2–282 (LHLKVQFLDD…EYHAFFRLSE (281 aa)). Residues 525–552 (RNMRIKSLQQDLQELQEAMARTSGRSNI) adopt a coiled-coil conformation.

In terms of tissue distribution, in the developing cerebral cortex, strong expression is observed in the ventricular and intermediate zones at 13 and 17 dpc. At 17 dpc and P0, expression appears to be restricted to the cortical plate. In neonates, highly expressed in cortex, hippocampus, cerebellum, olfactory bulb and eye with little or no expression in liver, kidney, skeletal muscle or heart muscle (at protein level).

Its subcellular location is the cell projection. It is found in the neuron projection. It localises to the growth cone. Its function is as follows. Plays a role in neurite development, may be through the activation of the GTPase RAC1. Plays a role in the control of eye movement and gaze stability. The protein is FERM domain-containing protein 7 of Mus musculus (Mouse).